The sequence spans 235 residues: Exosome complex component Rrp4 (235 aa).

The S1 motif domain occupies 63–137 (GDLVIGYVTD…DEYPIILTLK (75 aa)). Positions 147-203 (GTVVEITPVKVPRVIGKRGSMLNTLMELGCDIVVGQNGRIWVKCKDPRDEVFLASLI) constitute a KH domain.

Belongs to the RRP4 family. In terms of assembly, component of the archaeal exosome complex. Forms a trimer of Rrp4 and/or Csl4 subunits. The trimer associates with a hexameric ring-like arrangement composed of 3 Rrp41-Rrp42 heterodimers.

The protein resides in the cytoplasm. In terms of biological role, non-catalytic component of the exosome, which is a complex involved in RNA degradation. Increases the RNA binding and the efficiency of RNA degradation. Confers strong poly(A) specificity to the exosome. The protein is Exosome complex component Rrp4 of Pyrobaculum aerophilum (strain ATCC 51768 / DSM 7523 / JCM 9630 / CIP 104966 / NBRC 100827 / IM2).